The primary structure comprises 82 residues: Small ribosomal subunit protein uS17 (82 aa).

It belongs to the universal ribosomal protein uS17 family. In terms of assembly, part of the 30S ribosomal subunit.

Functionally, one of the primary rRNA binding proteins, it binds specifically to the 5'-end of 16S ribosomal RNA. This is Small ribosomal subunit protein uS17 from Afipia carboxidovorans (strain ATCC 49405 / DSM 1227 / KCTC 32145 / OM5) (Oligotropha carboxidovorans).